A 602-amino-acid chain; its full sequence is uncharacterized protein (602 aa).

Residues 51 to 210 form the Helicase ATP-binding domain; sequence QYLGTQPRDF…PFVSYQPDAD (160 aa). The span at 430-439 shows a compositional bias: basic and acidic residues; that stretch reads PHRESAHDPL. 2 disordered regions span residues 430 to 452 and 518 to 538; these read PHRE…TERG and RAQL…ASVH. The span at 523–534 shows a compositional bias: polar residues; it reads KGATQPATSGAS.

It to M.leprae ML1624.

This is an uncharacterized protein from Mycobacterium tuberculosis (strain CDC 1551 / Oshkosh).